The sequence spans 289 residues: Phosphate import ATP-binding protein PstB 2 (289 aa).

The ABC transporter domain occupies 37-276 (LHAKVEAFYY…HTPVIFQNPT (240 aa)). 69–76 (GPSGCGKS) is a binding site for ATP.

The protein belongs to the ABC transporter superfamily. Phosphate importer (TC 3.A.1.7) family. As to quaternary structure, the complex is composed of two ATP-binding proteins (PstB), two transmembrane proteins (PstC and PstA) and a solute-binding protein (PstS).

It is found in the cell inner membrane. The enzyme catalyses phosphate(out) + ATP + H2O = ADP + 2 phosphate(in) + H(+). Its function is as follows. Part of the ABC transporter complex PstSACB involved in phosphate import. Responsible for energy coupling to the transport system. In Trichormus variabilis (strain ATCC 29413 / PCC 7937) (Anabaena variabilis), this protein is Phosphate import ATP-binding protein PstB 2.